The primary structure comprises 99 residues: Putative membrane protein insertion efficiency factor (99 aa).

Belongs to the UPF0161 family.

Its subcellular location is the cell membrane. Could be involved in insertion of integral membrane proteins into the membrane. The sequence is that of Putative membrane protein insertion efficiency factor from Corynebacterium glutamicum (strain ATCC 13032 / DSM 20300 / JCM 1318 / BCRC 11384 / CCUG 27702 / LMG 3730 / NBRC 12168 / NCIMB 10025 / NRRL B-2784 / 534).